The sequence spans 415 residues: Gamma-glutamyl phosphate reductase (415 aa).

This sequence belongs to the gamma-glutamyl phosphate reductase family.

Its subcellular location is the cytoplasm. The enzyme catalyses L-glutamate 5-semialdehyde + phosphate + NADP(+) = L-glutamyl 5-phosphate + NADPH + H(+). Its pathway is amino-acid biosynthesis; L-proline biosynthesis; L-glutamate 5-semialdehyde from L-glutamate: step 2/2. In terms of biological role, catalyzes the NADPH-dependent reduction of L-glutamate 5-phosphate into L-glutamate 5-semialdehyde and phosphate. The product spontaneously undergoes cyclization to form 1-pyrroline-5-carboxylate. The chain is Gamma-glutamyl phosphate reductase from Cutibacterium acnes (strain DSM 16379 / KPA171202) (Propionibacterium acnes).